Consider the following 883-residue polypeptide: Protein SEY1 homolog (883 aa).

Over 1–795 (MQMDRKTQII…ETGGKMSLKN (795 aa)) the chain is Cytoplasmic. The region spanning 33 to 279 (GFNYNVVAIL…IPSDGFAHYC (247 aa)) is the GB1/RHD3-type G domain. 43–50 (GSQSSGKS) is a GTP binding site. Residues 673–693 (LDEIMDVLKSKLDEISDNLSS) are a coiled coil. The chain crosses the membrane as a helical span at residues 796-816 (VPLFFWVILLILGWNELLFFI). Topologically, residues 817–819 (RFF) are lumenal. A helical transmembrane segment spans residues 820–840 (FRLNIILPLFLAAAVILSTLF). At 841–883 (FNGNMEVLSTINKVVFFLAKSSFGFYRQLQTMGEKVAQVPTAD) the chain is on the cytoplasmic side.

The protein belongs to the TRAFAC class dynamin-like GTPase superfamily. GB1/RHD3 GTPase family. RHD3 subfamily.

It localises to the endoplasmic reticulum membrane. Probable GTP-binding protein involved in generating and maintaining the structure of the tubular endoplasmic reticulum network. This is Protein SEY1 homolog from Plasmodium knowlesi (strain H).